Consider the following 216-residue polypeptide: Uracil phosphoribosyltransferase (216 aa).

5-phospho-alpha-D-ribose 1-diphosphate contacts are provided by residues arginine 85, arginine 110, and 135–143; that span reads DPMVATGYS. Residues isoleucine 200 and 205–207 each bind uracil; that span reads GDA. Aspartate 206 is a binding site for 5-phospho-alpha-D-ribose 1-diphosphate.

The protein belongs to the UPRTase family. It depends on Mg(2+) as a cofactor.

It catalyses the reaction UMP + diphosphate = 5-phospho-alpha-D-ribose 1-diphosphate + uracil. It participates in pyrimidine metabolism; UMP biosynthesis via salvage pathway; UMP from uracil: step 1/1. With respect to regulation, allosterically activated by GTP. In terms of biological role, catalyzes the conversion of uracil and 5-phospho-alpha-D-ribose 1-diphosphate (PRPP) to UMP and diphosphate. The polypeptide is Uracil phosphoribosyltransferase (Burkholderia mallei (strain NCTC 10247)).